A 497-amino-acid polypeptide reads, in one-letter code: Acetyl-coenzyme A carboxylase carboxyl transferase subunit beta, chloroplastic (497 aa).

Residues 230–497 form the CoA carboxyltransferase N-terminal domain; sequence LWVQCENCYG…FFPVNSNSIK (268 aa). Residues C234, C237, C253, and C256 each contribute to the Zn(2+) site. The segment at 234–256 adopts a C4-type zinc-finger fold; that stretch reads CENCYGLNYKKFFRSKFNICEQC.

This sequence belongs to the AccD/PCCB family. Acetyl-CoA carboxylase is a heterohexamer composed of biotin carboxyl carrier protein, biotin carboxylase and 2 subunits each of ACCase subunit alpha and ACCase plastid-coded subunit beta (accD). Requires Zn(2+) as cofactor.

It localises to the plastid. The protein localises to the chloroplast stroma. It carries out the reaction N(6)-carboxybiotinyl-L-lysyl-[protein] + acetyl-CoA = N(6)-biotinyl-L-lysyl-[protein] + malonyl-CoA. Its pathway is lipid metabolism; malonyl-CoA biosynthesis; malonyl-CoA from acetyl-CoA: step 1/1. Component of the acetyl coenzyme A carboxylase (ACC) complex. Biotin carboxylase (BC) catalyzes the carboxylation of biotin on its carrier protein (BCCP) and then the CO(2) group is transferred by the transcarboxylase to acetyl-CoA to form malonyl-CoA. This is Acetyl-coenzyme A carboxylase carboxyl transferase subunit beta, chloroplastic from Nandina domestica (Heavenly bamboo).